A 627-amino-acid chain; its full sequence is DNA mismatch repair protein MutL (627 aa).

The interval 363 to 397 (FAEPAAREPVAPRYSPAPASGSRPAAPWPNAQPGY) is disordered. The segment covering 364 to 387 (AEPAAREPVAPRYSPAPASGSRPA) has biased composition (low complexity).

Belongs to the DNA mismatch repair MutL/HexB family.

Its function is as follows. This protein is involved in the repair of mismatches in DNA. It is required for dam-dependent methyl-directed DNA mismatch repair. May act as a 'molecular matchmaker', a protein that promotes the formation of a stable complex between two or more DNA-binding proteins in an ATP-dependent manner without itself being part of a final effector complex. This chain is DNA mismatch repair protein MutL, found in Shigella flexneri serotype 5b (strain 8401).